The primary structure comprises 483 residues: Proton-coupled amino acid transporter 2 (483 aa).

Residues 1–58 (MSVTKSTEGPQGAVAIKLDLMSPPESAKKLENKDSTFLDESPSESAGLKKTKGITVFQ) are Cytoplasmic-facing. Basic and acidic residues predominate over residues 26-36 (SAKKLENKDST). Residues 26-46 (SAKKLENKDSTFLDESPSESA) are disordered. Residues 59–79 (ALIHLVKGNMGTGILGLPLAV) traverse the membrane as a helical segment. The Extracellular segment spans residues 80–81 (KN). Residues 82 to 102 (AGILMGPLSLLVMGFIACHCM) traverse the membrane as a helical segment. The Cytoplasmic portion of the chain corresponds to 103 to 148 (HILVKCAQRFCKRLNKPFMDYGDTVMHGLEANPNAWLQNHAHWGRH). A helical transmembrane segment spans residues 149–169 (IVSFFLIITQLGFCCVYIVFL). Residues 170–197 (ADNLKQVVEAVNSTTNNCYSNETVILTP) lie on the Extracellular side of the membrane. A helical transmembrane segment spans residues 198–218 (TMDSRLYMLSFLPFLVLLVLI). Topologically, residues 219 to 222 (RNLR) are cytoplasmic. The helical transmembrane segment at 223-243 (ILTIFSMLANISMLVSLVIII) threads the bilayer. At 244–264 (QYITQEIPDPSRLPLVASWKT) the chain is on the extracellular side. The helical transmembrane segment at 265 to 285 (YPLFFGTAIFSFESIGVVLPL) threads the bilayer. Over 286–296 (ENKMKNARHFP) the chain is Cytoplasmic. The chain crosses the membrane as a helical span at residues 297-317 (AILSLGMSIVTSLYIGMAALG). Residues 318–349 (YLRFGDDIKASISLNLPNCWLYQSVKLLYIAG) are Extracellular-facing. The chain crosses the membrane as a helical span at residues 350–370 (ILCTYALQFYVPAEIIIPFAI). The Cytoplasmic segment spans residues 371–379 (SRVSTRWAL). Residues 380-400 (PLDLSIRLVMVCLTCLLAILI) form a helical membrane-spanning segment. Topologically, residues 401–404 (PRLD) are extracellular. A helical transmembrane segment spans residues 405–425 (LVISLVGSVSGTALALIIPPL). The Cytoplasmic segment spans residues 426–437 (LEVTTFYSEGMS). A helical membrane pass occupies residues 438–458 (PLTIFKDALISILGFVGFVVG). At 459 to 483 (TYQALDELLKSEDSHPFSNSTTFVR) the chain is on the extracellular side.

It belongs to the amino acid/polyamine transporter 2 family. Abundantly expressed in kidney and muscle. Expressed in the S1 segment of the proximal tubule close to the glomerulus.

The protein resides in the cell membrane. Its subcellular location is the endoplasmic reticulum membrane. It localises to the recycling endosome membrane. It catalyses the reaction glycine(in) + H(+)(in) = glycine(out) + H(+)(out). The enzyme catalyses L-alanine(in) + H(+)(in) = L-alanine(out) + H(+)(out). The catalysed reaction is D-alanine(in) + H(+)(in) = D-alanine(out) + H(+)(out). It carries out the reaction L-proline(out) + H(+)(out) = L-proline(in) + H(+)(in). It catalyses the reaction D-proline(out) + H(+)(out) = D-proline(in) + H(+)(in). The enzyme catalyses 4-hydroxy-L-proline(in) + H(+)(in) = 4-hydroxy-L-proline(out) + H(+)(out). The catalysed reaction is L-serine(in) + H(+)(in) = L-serine(out) + H(+)(out). It carries out the reaction D-serine(out) + H(+)(out) = D-serine(in) + H(+)(in). It catalyses the reaction beta-alanine(in) + H(+)(in) = beta-alanine(out) + H(+)(out). The enzyme catalyses 4-aminobutanoate(in) + H(+)(in) = 4-aminobutanoate(out) + H(+)(out). The catalysed reaction is sarcosine(in) + H(+)(in) = sarcosine(out) + H(+)(out). It carries out the reaction N,N-dimethylglycine(in) + H(+)(in) = N,N-dimethylglycine(out) + H(+)(out). Functionally, electrogenic proton/amino acid symporter with a high selectivity for the small side chains amino acids glycine, alanine and proline, where both L- and D-enantiomers are transported. Extension of the backbone length, as in beta-alanine and 4-aminobutanoate or methylation of the amino group, as in sarcosine and N,N-dimethylglycine, are also tolerated but decrease transport efficiency. A free carboxyl group is preferred. In Homo sapiens (Human), this protein is Proton-coupled amino acid transporter 2.